The sequence spans 222 residues: Charged multivesicular body protein 2a (222 aa).

Met1 bears the N-acetylmethionine mark. Residues 12 to 53 (EELLRQNQRALNRAMRELDRERQKLETQEKKIIADIKKMAKQ) adopt a coiled-coil conformation. The interaction with VPS4B stretch occupies residues 56–222 (MDAVRIMAKD…EERLKNLRRD (167 aa)). The span at 179–188 (LSNLPSTGGS) shows a compositional bias: polar residues. The segment at 179–198 (LSNLPSTGGSLSVAAGGKKA) is disordered. Ser184 bears the Phosphoserine mark. At Thr185 the chain carries Phosphothreonine. 3 positions are modified to phosphoserine: Ser188, Ser190, and Ser203. Residues 195-222 (GKKAEATASALADADADLEERLKNLRRD) are a coiled coil. The MIT-interacting motif motif lies at 210–220 (ADLEERLKNLR). The segment at 217–222 (KNLRRD) is interaction with VTA1.

This sequence belongs to the SNF7 family. Probable core component of the endosomal sorting required for transport complex III (ESCRT-III). ESCRT-III components are thought to multimerize to form a flat lattice on the perimeter membrane of the endosome. Several assembly forms of ESCRT-III may exist that interact and act sequentially. In vitro, heteromerizes with CHMP3 (but not CHMP4) to form helical tubular structures that expose membrane-interacting sites on the outside whereas VPS4B can associate on the inside of the tubule. Interacts with CHMP1B, CHMP2B, CHMP3, CHMP4A, CHMP4B, CHMP4C and CHMP5. Interacts with VPS4A; the interaction is direct. Interacts with VPS4B; the interaction is direct. Interacts with MITD1. Interacts with VTA1; the interaction probably involves the open conformation of CHMP2A. In terms of processing, ISGylated in a CHMP5-dependent manner. Isgylation weakens and inhibits its interactions with VPS4A and VTA1 respectively. Widely expressed. Highly expressed in brain, heart, liver and kidney.

Its subcellular location is the late endosome membrane. The protein resides in the cytoplasm. It is found in the nucleus envelope. Functionally, probable core component of the endosomal sorting required for transport complex III (ESCRT-III) which is involved in multivesicular bodies (MVBs) formation and sorting of endosomal cargo proteins into MVBs. MVBs contain intraluminal vesicles (ILVs) that are generated by invagination and scission from the limiting membrane of the endosome and mostly are delivered to lysosomes enabling degradation of membrane proteins, such as stimulated growth factor receptors, lysosomal enzymes and lipids. The MVB pathway appears to require the sequential function of ESCRT-O, -I,-II and -III complexes. ESCRT-III proteins mostly dissociate from the invaginating membrane before the ILV is released. The ESCRT machinery also functions in topologically equivalent membrane fission events, such as the terminal stages of cytokinesis. Together with SPAST, the ESCRT-III complex promotes nuclear envelope sealing and mitotic spindle disassembly during late anaphase. Recruited to the reforming nuclear envelope (NE) during anaphase by LEMD2. ESCRT-III proteins are believed to mediate the necessary vesicle extrusion and/or membrane fission activities, possibly in conjunction with the AAA ATPase VPS4. The protein is Charged multivesicular body protein 2a (Chmp2a) of Mus musculus (Mouse).